The primary structure comprises 391 residues: 3-ketoacyl-CoA thiolase (391 aa).

The active-site Acyl-thioester intermediate is Cys-95. Active-site proton acceptor residues include His-347 and Cys-377.

The protein belongs to the thiolase-like superfamily. Thiolase family. Heterotetramer of two alpha chains (FadB) and two beta chains (FadA).

It localises to the cytoplasm. The enzyme catalyses an acyl-CoA + acetyl-CoA = a 3-oxoacyl-CoA + CoA. It participates in lipid metabolism; fatty acid beta-oxidation. Functionally, catalyzes the final step of fatty acid oxidation in which acetyl-CoA is released and the CoA ester of a fatty acid two carbons shorter is formed. This Ectopseudomonas oleovorans (Pseudomonas oleovorans) protein is 3-ketoacyl-CoA thiolase.